A 183-amino-acid polypeptide reads, in one-letter code: Mitochondrial inner membrane protease subunit 2 (183 aa).

The helical transmembrane segment at 13 to 35 threads the bilayer; that stretch reads AFVSGFFVAVPVTVTVLDRLAYV. Active-site residues include serine 42 and lysine 90. Residues 161–183 are disordered; that stretch reads SVPPDRRPLLNWDRAAEDKYDDD. Residues 164-183 are compositionally biased toward basic and acidic residues; that stretch reads PDRRPLLNWDRAAEDKYDDD.

It belongs to the peptidase S26 family. IMP2 subfamily. In terms of assembly, heterodimer of 2 subunits, IMMPL1 and IMMPL2.

The protein resides in the mitochondrion inner membrane. Its function is as follows. Catalyzes the removal of transit peptides required for the targeting of proteins from the mitochondrial matrix, across the inner membrane, into the inter-membrane space. The polypeptide is Mitochondrial inner membrane protease subunit 2 (immp2l) (Danio rerio (Zebrafish)).